Here is a 426-residue protein sequence, read N- to C-terminus: Putative phosphate permease TC_0064 (426 aa).

The next 11 membrane-spanning stretches (helical) occupy residues 1–21 (MWWL…NIGA), 37–57 (LTLR…AVVL), 83–103 (VFGM…ASFF), 104–124 (GWPV…GIIL), 140–160 (VSWL…FSFI), 183–203 (AIII…ARVV), 207–227 (VAFR…IWGV), 260–280 (LVVE…MSFA), 309–329 (VLFI…ATWG), 365–385 (FGFP…VGLA), and 399–419 (IVLS…MFFL).

It belongs to the inorganic phosphate transporter (PiT) (TC 2.A.20) family.

Its subcellular location is the cell membrane. In terms of biological role, potential transporter for phosphate. This Chlamydia muridarum (strain MoPn / Nigg) protein is Putative phosphate permease TC_0064.